The primary structure comprises 431 residues: Histidinol dehydrogenase (431 aa).

NAD(+)-binding residues include tyrosine 130, glutamine 191, and asparagine 214. Serine 237, glutamine 261, and histidine 264 together coordinate substrate. Residues glutamine 261 and histidine 264 each coordinate Zn(2+). Catalysis depends on proton acceptor residues glutamate 329 and histidine 330. Histidine 330, aspartate 363, glutamate 417, and histidine 422 together coordinate substrate. Aspartate 363 provides a ligand contact to Zn(2+). Position 422 (histidine 422) interacts with Zn(2+).

This sequence belongs to the histidinol dehydrogenase family. Zn(2+) is required as a cofactor.

It catalyses the reaction L-histidinol + 2 NAD(+) + H2O = L-histidine + 2 NADH + 3 H(+). The protein operates within amino-acid biosynthesis; L-histidine biosynthesis; L-histidine from 5-phospho-alpha-D-ribose 1-diphosphate: step 9/9. In terms of biological role, catalyzes the sequential NAD-dependent oxidations of L-histidinol to L-histidinaldehyde and then to L-histidine. This is Histidinol dehydrogenase from Psychrobacter arcticus (strain DSM 17307 / VKM B-2377 / 273-4).